The sequence spans 219 residues: tRNA (guanine-N(7)-)-methyltransferase (219 aa).

S-adenosyl-L-methionine is bound by residues Glu43, Asp68, Glu101, and Asn124. Residues Lys128 and Asp160 each coordinate substrate.

The protein belongs to the class I-like SAM-binding methyltransferase superfamily. TrmB family.

It carries out the reaction guanosine(46) in tRNA + S-adenosyl-L-methionine = N(7)-methylguanosine(46) in tRNA + S-adenosyl-L-homocysteine. It participates in tRNA modification; N(7)-methylguanine-tRNA biosynthesis. In terms of biological role, catalyzes the formation of N(7)-methylguanine at position 46 (m7G46) in tRNA. This chain is tRNA (guanine-N(7)-)-methyltransferase, found in Clostridium botulinum (strain Alaska E43 / Type E3).